A 475-amino-acid chain; its full sequence is Aspartyl/glutamyl-tRNA(Asn/Gln) amidotransferase subunit B (475 aa).

This sequence belongs to the GatB/GatE family. GatB subfamily. As to quaternary structure, heterotrimer of A, B and C subunits.

It catalyses the reaction L-glutamyl-tRNA(Gln) + L-glutamine + ATP + H2O = L-glutaminyl-tRNA(Gln) + L-glutamate + ADP + phosphate + H(+). The catalysed reaction is L-aspartyl-tRNA(Asn) + L-glutamine + ATP + H2O = L-asparaginyl-tRNA(Asn) + L-glutamate + ADP + phosphate + 2 H(+). Its function is as follows. Allows the formation of correctly charged Asn-tRNA(Asn) or Gln-tRNA(Gln) through the transamidation of misacylated Asp-tRNA(Asn) or Glu-tRNA(Gln) in organisms which lack either or both of asparaginyl-tRNA or glutaminyl-tRNA synthetases. The reaction takes place in the presence of glutamine and ATP through an activated phospho-Asp-tRNA(Asn) or phospho-Glu-tRNA(Gln). The chain is Aspartyl/glutamyl-tRNA(Asn/Gln) amidotransferase subunit B from Chlorobium luteolum (strain DSM 273 / BCRC 81028 / 2530) (Pelodictyon luteolum).